We begin with the raw amino-acid sequence, 768 residues long: Transferrin receptor protein 1 (768 aa).

The Cytoplasmic portion of the chain corresponds to 1 to 68; the sequence is MMDQARSAFS…VAKPKRLNGY (68 aa). The tract at residues 1–70 is mediates interaction with SH3BP4; it reads MMDQARSAFS…KPKRLNGYVC (70 aa). A phosphoserine mark is found at S10 and S19. Y20 carries the phosphotyrosine modification. Positions 20-23 match the Endocytosis signal motif; sequence YTRF. T21 carries the phosphothreonine modification. S24 is subject to Phosphoserine. The Stop-transfer sequence motif lies at 61 to 64; that stretch reads KPKR. A helical membrane pass occupies residues 69 to 89; that stretch reads VCYGIIAVITFFLIGFMIGYL. A lipid anchor (S-palmitoyl cysteine) is attached at C70. The Extracellular segment spans residues 90 to 768; that stretch reads AYCKRVESKT…GDIWDIDNEF (679 aa). In terms of domain architecture, PA spans 231–321; the sequence is SKATTVTGKL…GTGDPYTPGF (91 aa). N-linked (GlcNAc...) asparagine glycans are attached at residues N259 and N325. Positions 577 to 768 are ligand-binding; it reads TMDTYDVLSK…GDIWDIDNEF (192 aa). The Cell attachment site motif lies at 654–656; the sequence is RGD. 2 N-linked (GlcNAc...) asparagine glycosylation sites follow: N730 and N735.

The protein belongs to the peptidase M28 family. M28B subfamily. In terms of assembly, homodimer; disulfide-linked. Binds one transferrin or HFE molecule per subunit. Interacts with SH3BP4. Interacts with SH3BP3. Interacts with STEAP3; facilitates TFRC endocytosis in erythroid precursor cells. In terms of processing, stearoylated by ZDHHC6 which inhibits TFRC-mediated activation of the JNK pathway and promotes mitochondrial fragmentation. Stearoylation does not affect iron uptake.

The protein resides in the cell membrane. It localises to the melanosome. Functionally, cellular uptake of iron occurs via receptor-mediated endocytosis of ligand-occupied transferrin receptor into specialized endosomes. Endosomal acidification leads to iron release. The apotransferrin-receptor complex is then recycled to the cell surface with a return to neutral pH and the concomitant loss of affinity of apotransferrin for its receptor. Transferrin receptor is necessary for development of erythrocytes and the nervous system. Positively regulates T and B cell proliferation through iron uptake. Acts as a lipid sensor that regulates mitochondrial fusion by regulating activation of the JNK pathway. When dietary levels of stearate (C18:0) are low, promotes activation of the JNK pathway, resulting in HUWE1-mediated ubiquitination and subsequent degradation of the mitofusin MFN2 and inhibition of mitochondrial fusion. When dietary levels of stearate (C18:0) are high, TFRC stearoylation inhibits activation of the JNK pathway and thus degradation of the mitofusin MFN2. Mediates uptake of NICOL1 into fibroblasts where it may regulate extracellular matrix production. The polypeptide is Transferrin receptor protein 1 (TFRC) (Sus scrofa (Pig)).